We begin with the raw amino-acid sequence, 126 residues long: Small ribosomal subunit protein uS13 (126 aa).

A disordered region spans residues histidine 92–lysine 126.

It belongs to the universal ribosomal protein uS13 family. Part of the 30S ribosomal subunit. Forms a loose heterodimer with protein S19. Forms two bridges to the 50S subunit in the 70S ribosome.

Functionally, located at the top of the head of the 30S subunit, it contacts several helices of the 16S rRNA. In the 70S ribosome it contacts the 23S rRNA (bridge B1a) and protein L5 of the 50S subunit (bridge B1b), connecting the 2 subunits; these bridges are implicated in subunit movement. Contacts the tRNAs in the A and P-sites. The sequence is that of Small ribosomal subunit protein uS13 from Deinococcus deserti (strain DSM 17065 / CIP 109153 / LMG 22923 / VCD115).